Consider the following 845-residue polypeptide: BLOC-2 complex member HPS5 homolog (845 aa).

The tract at residues 239–268 is disordered; that stretch reads PTEEDLEDAKSMEGSDDNDNDQRSSPSGVK.

It belongs to the HPS5 family.

In terms of biological role, has a role in the biogenesis of eye pigment granules. Eye pigment granules are specialized forms of late endosomes or lysosomes. Biogenesis of pigment granules in the eye requires molecular components required for protein delivery to lysosomes. This Aedes aegypti (Yellowfever mosquito) protein is BLOC-2 complex member HPS5 homolog.